The primary structure comprises 213 residues: Adenylate kinase (213 aa).

10-15 (GAGKGT) contributes to the ATP binding site. An NMP region spans residues 30–59 (STGDMFRAAMANQTEMGVLAKSYIDKGDLV). Residues Thr-31, Arg-36, 57–59 (DLV), 86–89 (GYPR), and Gln-93 contribute to the AMP site. The segment at 127–160 (GRIINKKTGETFHKIFNPPVGDYKEEDFYQREDD) is LID. Residues Arg-128 and 137–138 (TF) each bind ATP. The AMP site is built by Arg-157 and Arg-168. Lys-196 serves as a coordination point for ATP.

This sequence belongs to the adenylate kinase family. Monomer.

The protein localises to the cytoplasm. The catalysed reaction is AMP + ATP = 2 ADP. It participates in purine metabolism; AMP biosynthesis via salvage pathway; AMP from ADP: step 1/1. Catalyzes the reversible transfer of the terminal phosphate group between ATP and AMP. Plays an important role in cellular energy homeostasis and in adenine nucleotide metabolism. The protein is Adenylate kinase of Streptococcus equi subsp. zooepidemicus (strain H70).